A 252-amino-acid chain; its full sequence is Imidazole glycerol phosphate synthase subunit HisF (252 aa).

Active-site residues include aspartate 11 and aspartate 130.

This sequence belongs to the HisA/HisF family. In terms of assembly, heterodimer of HisH and HisF.

It is found in the cytoplasm. The enzyme catalyses 5-[(5-phospho-1-deoxy-D-ribulos-1-ylimino)methylamino]-1-(5-phospho-beta-D-ribosyl)imidazole-4-carboxamide + L-glutamine = D-erythro-1-(imidazol-4-yl)glycerol 3-phosphate + 5-amino-1-(5-phospho-beta-D-ribosyl)imidazole-4-carboxamide + L-glutamate + H(+). The protein operates within amino-acid biosynthesis; L-histidine biosynthesis; L-histidine from 5-phospho-alpha-D-ribose 1-diphosphate: step 5/9. IGPS catalyzes the conversion of PRFAR and glutamine to IGP, AICAR and glutamate. The HisF subunit catalyzes the cyclization activity that produces IGP and AICAR from PRFAR using the ammonia provided by the HisH subunit. This is Imidazole glycerol phosphate synthase subunit HisF from Pelotomaculum thermopropionicum (strain DSM 13744 / JCM 10971 / SI).